Consider the following 607-residue polypeptide: Glutamine--fructose-6-phosphate aminotransferase [isomerizing] (607 aa).

The active-site Nucleophile; for GATase activity is the Cys-2. The Glutamine amidotransferase type-2 domain maps to 2 to 217 (CGIIGILGKK…DGDWAVLTRE (216 aa)). SIS domains lie at 277–422 (TVRS…QRGS) and 455–597 (ICRD…VDQP). Lys-602 acts as the For Fru-6P isomerization activity in catalysis.

As to quaternary structure, homodimer.

Its subcellular location is the cytoplasm. It carries out the reaction D-fructose 6-phosphate + L-glutamine = D-glucosamine 6-phosphate + L-glutamate. In terms of biological role, catalyzes the first step in hexosamine metabolism, converting fructose-6P into glucosamine-6P using glutamine as a nitrogen source. The protein is Glutamine--fructose-6-phosphate aminotransferase [isomerizing] of Bartonella quintana (strain Toulouse) (Rochalimaea quintana).